The chain runs to 45 residues: Large ribosomal subunit protein bL36 (45 aa).

The segment at 1–20 is disordered; the sequence is MKVSSSIKADPSKGDKLVRR.

It belongs to the bacterial ribosomal protein bL36 family.

In Chlamydia abortus (strain DSM 27085 / S26/3) (Chlamydophila abortus), this protein is Large ribosomal subunit protein bL36.